A 542-amino-acid polypeptide reads, in one-letter code: Protein phosphatase 1G (542 aa).

A lipid anchor (N-myristoyl glycine) is attached at Gly2. Arg22 is modified (omega-N-methylarginine). One can recognise a PPM-type phosphatase domain in the interval Pro26–Phe502. Mn(2+) is bound by residues Asp60 and Gly61. 2 disordered regions span residues Ile117–Asp136 and Cys164–Gly325. Thr122 carries the phosphothreonine modification. Composition is skewed to acidic residues over residues Glu123–Asp136 and Asp259–Met309. Lys380 carries the N6-acetyllysine modification. Mn(2+)-binding residues include Asp438 and Asp493. Residues Glu513–Asp542 are disordered. Ser524 is subject to Phosphoserine.

This sequence belongs to the PP2C family. Interacts with NOL3; may dephosphorylate NOL3. Mg(2+) is required as a cofactor. Mn(2+) serves as cofactor. As to expression, highly expressed in testis. Low level of expression in kidney. Also expressed in a number of tissues undergoing proliferation including embryo, uterus at pregnancy, placenta, and ovaries.

The protein localises to the nucleus. It is found in the membrane. The catalysed reaction is O-phospho-L-seryl-[protein] + H2O = L-seryl-[protein] + phosphate. It catalyses the reaction O-phospho-L-threonyl-[protein] + H2O = L-threonyl-[protein] + phosphate. Functionally, may be involved in regulation of cell cycle. In Mus musculus (Mouse), this protein is Protein phosphatase 1G (Ppm1g).